The chain runs to 458 residues: Cysteine--tRNA ligase (458 aa).

Zn(2+) is bound at residue cysteine 27. The 'HIGH' region signature appears at 29 to 39 (ITPQSEPHIGH). The Zn(2+) site is built by cysteine 207, histidine 232, and glutamate 236. Positions 265–269 (KMSKS) match the 'KMSKS' region motif. Lysine 268 provides a ligand contact to ATP.

It belongs to the class-I aminoacyl-tRNA synthetase family. As to quaternary structure, monomer. Zn(2+) serves as cofactor.

Its subcellular location is the cytoplasm. It catalyses the reaction tRNA(Cys) + L-cysteine + ATP = L-cysteinyl-tRNA(Cys) + AMP + diphosphate. The protein is Cysteine--tRNA ligase of Dehalococcoides mccartyi (strain ATCC BAA-2266 / KCTC 15142 / 195) (Dehalococcoides ethenogenes (strain 195)).